The chain runs to 377 residues: Putative efflux system component YknX (377 aa).

The chain crosses the membrane as a helical span at residues 3–23; the sequence is KVWIGIGIAVIVALFVGINIY. Residues 95-187 adopt a coiled-coil conformation; that stretch reads TNEQLSLEKE…RVSDLEVKSE (93 aa).

Belongs to the membrane fusion protein (MFP) (TC 8.A.1) family. In terms of assembly, part of a complex composed of YknX, YknY and YknZ. The complex interacts with YknW.

The protein resides in the cell membrane. Functionally, part of an unusual four-component transporter, which is required for protection against the killing factor SdpC (sporulation-delaying protein). The sequence is that of Putative efflux system component YknX (yknX) from Bacillus subtilis (strain 168).